The following is a 228-amino-acid chain: UPF0134 protein MPN_137 (228 aa).

This sequence belongs to the UPF0134 family.

The polypeptide is UPF0134 protein MPN_137 (Mycoplasma pneumoniae (strain ATCC 29342 / M129 / Subtype 1) (Mycoplasmoides pneumoniae)).